The following is a 213-amino-acid chain: Octanoyltransferase (213 aa).

The 176-residue stretch at 32–207 (ESTLDEIWLV…NILALLNNPD (176 aa)) folds into the BPL/LPL catalytic domain. Substrate is bound by residues 71–78 (RGGQVTYH), 138–140 (SLG), and 151–153 (GLA). The active-site Acyl-thioester intermediate is Cys169.

The protein belongs to the LipB family.

The protein resides in the cytoplasm. It carries out the reaction octanoyl-[ACP] + L-lysyl-[protein] = N(6)-octanoyl-L-lysyl-[protein] + holo-[ACP] + H(+). The protein operates within protein modification; protein lipoylation via endogenous pathway; protein N(6)-(lipoyl)lysine from octanoyl-[acyl-carrier-protein]: step 1/2. Catalyzes the transfer of endogenously produced octanoic acid from octanoyl-acyl-carrier-protein onto the lipoyl domains of lipoate-dependent enzymes. Lipoyl-ACP can also act as a substrate although octanoyl-ACP is likely to be the physiological substrate. The protein is Octanoyltransferase of Escherichia coli (strain SMS-3-5 / SECEC).